We begin with the raw amino-acid sequence, 376 residues long: tRNA-specific 2-thiouridylase MnmA (376 aa).

ATP-binding positions include 14-21 (GMSGGVDS) and M40. The tract at residues 100-102 (NPD) is interaction with target base in tRNA. C105 serves as the catalytic Nucleophile. A disulfide bridge links C105 with C202. An ATP-binding site is contributed by G129. An interaction with tRNA region spans residues 152–154 (KDQ). Residue C202 is the Cysteine persulfide intermediate of the active site. Residues 315–316 (RY) are interaction with tRNA.

The protein belongs to the MnmA/TRMU family.

It is found in the cytoplasm. It carries out the reaction S-sulfanyl-L-cysteinyl-[protein] + uridine(34) in tRNA + AH2 + ATP = 2-thiouridine(34) in tRNA + L-cysteinyl-[protein] + A + AMP + diphosphate + H(+). In terms of biological role, catalyzes the 2-thiolation of uridine at the wobble position (U34) of tRNA, leading to the formation of s(2)U34. The sequence is that of tRNA-specific 2-thiouridylase MnmA from Lactococcus lactis subsp. lactis (strain IL1403) (Streptococcus lactis).